Reading from the N-terminus, the 374-residue chain is Guanine nucleotide-binding protein subunit alpha-15 (374 aa).

In terms of domain architecture, G-alpha spans Gly-41–Leu-374. Positions Lys-44–Thr-57 are G1 motif. GTP is bound by residues Gly-49 to Ser-56, Leu-183 to Thr-189, Asp-208 to Gln-212, Asn-277 to Asp-280, and Ala-346. Ser-56 contacts Mg(2+). Residues Asp-181 to Thr-189 form a G2 motif region. Position 186 is an ADP-ribosylarginine; by cholera toxin (Arg-186). Thr-189 contacts Mg(2+). Residues Leu-204–Lys-213 are G3 motif. Positions Ile-273–Asp-280 are G4 motif. Residues Thr-344 to Thr-349 form a G5 motif region.

The protein belongs to the G-alpha family. G(q) subfamily. In terms of assembly, g proteins are composed of 3 units; alpha, beta and gamma. The alpha chain contains the guanine nucleotide binding site. As to expression, specifically expressed in hematopoietic cells. Expressed in epididymis (at protein level).

Its function is as follows. Guanine nucleotide-binding proteins (G proteins) are involved as modulators or transducers in various transmembrane signaling systems. The protein is Guanine nucleotide-binding protein subunit alpha-15 (GNA15) of Homo sapiens (Human).